Consider the following 457-residue polypeptide: Vasoactive intestinal polypeptide receptor (457 aa).

The first 19 residues, 1–19, serve as a signal peptide directing secretion; the sequence is MGLVEVVWWWRWRFGGGGG. Topologically, residues 20 to 141 are extracellular; the sequence is GLVVEVEVWW…KEQTAFYGTV (122 aa). Disulfide bonds link cysteine 51-cysteine 73, cysteine 64-cysteine 105, and cysteine 87-cysteine 122. 4 N-linked (GlcNAc...) asparagine glycosylation sites follow: asparagine 59, asparagine 70, asparagine 100, and asparagine 104. A helical transmembrane segment spans residues 142–166; the sequence is KTGYTIGHTLSLIALTAAMIILCLF. Residues 167-173 are Cytoplasmic-facing; the sequence is RKLHCTR. A helical transmembrane segment spans residues 174–193; it reads NYIHMHLFMSFIMRAIAVFI. At 194–215 the chain is on the extracellular side; it reads KDVTLFESGEPEHCFVSSVGCK. Cysteine 214 and cysteine 284 are disulfide-bonded. A helical membrane pass occupies residues 216–239; sequence AMMVFFQYCVMANFFWLLVEGLYL. Topologically, residues 240-253 are cytoplasmic; that stretch reads HTLLVISFFSERKY. Residues 254–275 form a helical membrane-spanning segment; the sequence is FWWYILIGWGAPSVFITAWTVV. Topologically, residues 276–292 are extracellular; that stretch reads RIYFFNVGCWEEIIESP. Residues 293-316 form a helical membrane-spanning segment; it reads IWWIIKTPILVSILVNFILFICII. Topologically, residues 317 to 341 are cytoplasmic; it reads RILVQKLHSPDVGHNETSQYSRLAK. A helical transmembrane segment spans residues 342 to 361; the sequence is STLLLIPLFGIHYIMFAFFP. Residues 362 to 373 are Extracellular-facing; it reads DNFKAQVKLVFE. A helical transmembrane segment spans residues 374-393; that stretch reads LVVGSFQGFVVAVLYCFLNG. Topologically, residues 394–457 are cytoplasmic; sequence EVQAELKRKW…SSFQAEFSLV (64 aa).

This sequence belongs to the G-protein coupled receptor 2 family. In terms of tissue distribution, expressed in pituitary, hypothalamus, small intestine and ovarian follicles.

It is found in the cell membrane. Functionally, this is a receptor for VIP. The activity of this receptor is mediated by G proteins which activate adenylyl cyclase. This chain is Vasoactive intestinal polypeptide receptor (VIPR1), found in Meleagris gallopavo (Wild turkey).